A 106-amino-acid chain; its full sequence is PAT complex subunit Asterix (106 aa).

Residues 1-10 (MSANSMSDPR) show a composition bias toward polar residues. The disordered stretch occupies residues 1 to 29 (MSANSMSDPRSPNKVLRYKPPPSECNPAL). N-acetylserine is present on Ser-2. At 2 to 32 (SANSMSDPRSPNKVLRYKPPPSECNPALDDP) the chain is on the cytoplasmic side. The chain crosses the membrane as a helical span at residues 33 to 51 (TPDYMNLLGMIFSMCGLML). Position 52 (Lys-52) is a topological domain, lumenal. Residues 53-70 (LKWCAWVAVYCSFISFAN) traverse the membrane as a helical segment. The Cytoplasmic segment spans residues 71–74 (SRSS). The helical transmembrane segment at 75-95 (EDTKQMMSSFMLSISAVVMSY) threads the bilayer. At 96–106 (LQNPQPMTPPW) the chain is on the lumenal side.

This sequence belongs to the Asterix family. In terms of assembly, component of the PAT complex, composed of WDR83OS/Asterix and CCDC47. The PAT complex is part of the multi-pass translocon (MPT) complex, composed of three subcomplexes, the GEL complex (composed of RAB5IF/OPTI and TMCO1), the BOS complex (composed of NCLN/Nicalin, NOMO1 and TMEM147) and the PAT complex (composed of WDR83OS/Asterix and CCDC47). The MPT complex associates with the SEC61 complex.

It is found in the endoplasmic reticulum membrane. Component of the multi-pass translocon (MPT) complex that mediates insertion of multi-pass membrane proteins into the lipid bilayer of membranes. The MPT complex takes over after the SEC61 complex: following membrane insertion of the first few transmembrane segments of proteins by the SEC61 complex, the MPT complex occludes the lateral gate of the SEC61 complex to promote insertion of subsequent transmembrane regions. Within the MPT complex, the PAT subcomplex sequesters any highly polar regions in the transmembrane domains away from the non-polar membrane environment until they can be buried in the interior of the fully assembled protein. Within the PAT subcomplex, WDR83OS/Asterix binds to and redirects the substrate to a location behind the SEC61 complex. In Sus scrofa (Pig), this protein is PAT complex subunit Asterix (WDR83OS).